The chain runs to 165 residues: Putative 4-hydroxy-4-methyl-2-oxoglutarate aldolase (165 aa).

Substrate is bound by residues 80–83 (GGNL) and R102. D103 contacts a divalent metal cation.

The protein belongs to the class II aldolase/RraA-like family. As to quaternary structure, homotrimer. Requires a divalent metal cation as cofactor.

The catalysed reaction is 4-hydroxy-4-methyl-2-oxoglutarate = 2 pyruvate. It carries out the reaction oxaloacetate + H(+) = pyruvate + CO2. Catalyzes the aldol cleavage of 4-hydroxy-4-methyl-2-oxoglutarate (HMG) into 2 molecules of pyruvate. Also contains a secondary oxaloacetate (OAA) decarboxylase activity due to the common pyruvate enolate transition state formed following C-C bond cleavage in the retro-aldol and decarboxylation reactions. The chain is Putative 4-hydroxy-4-methyl-2-oxoglutarate aldolase from Cupriavidus necator (strain ATCC 17699 / DSM 428 / KCTC 22496 / NCIMB 10442 / H16 / Stanier 337) (Ralstonia eutropha).